The sequence spans 66 residues: Toxin Boma6c (66 aa).

Residues 2–64 (RDAYIAQNYN…VPIRIPGKCH (63 aa)) enclose the LCN-type CS-alpha/beta domain. 4 disulfides stabilise this stretch: cysteine 12/cysteine 63, cysteine 16/cysteine 36, cysteine 22/cysteine 46, and cysteine 26/cysteine 48.

The protein belongs to the long (4 C-C) scorpion toxin superfamily. Sodium channel inhibitor family. Alpha subfamily. As to expression, expressed by the venom gland.

The protein localises to the secreted. Functionally, alpha toxins bind voltage-independently at site-3 of sodium channels (Nav) and inhibit the inactivation of the activated channels, thereby blocking neuronal transmission. In Buthus occitanus mardochei (Moroccan scorpion), this protein is Toxin Boma6c.